The following is a 707-amino-acid chain: Lipase maturation factor 2 (707 aa).

Helical transmembrane passes span 10-30, 78-98, 102-122, 123-143, 165-185, 227-247, 259-279, 310-330, 364-384, and 399-419; these read LFLQGVAAVFMFAFASLYTQI, LELLSLLGALVALGALLLSPL, VIYLLLWAAYLSACQVGQVFL, YFQWDSLLLETGFLAVLVAPL, DLPFWLVRWLLFRLMFASGVV, LSVVATFLIEIAVPPLFFAPI, VLLQVLIIITGNYNFFNLMTL, ALLATLSLLLELAVYGLLAYG, LTLPTVWLGVASLVWELLSAL, and AVVQLSLVGTATVALFLISLV. 2 N-linked (GlcNAc...) asparagine glycosylation sites follow: N489 and N616. The chain crosses the membrane as a helical span at residues 637 to 657; that stretch reads ALLWGLLMAVGAVRFVQALLA. Positions 665 to 707 are disordered; sequence PLAPVSGEKRRPASQKDSGAASEQATAAPNPCSSSSRTTRRKK. Over residues 679–691 the composition is skewed to polar residues; that stretch reads QKDSGAASEQATA.

This sequence belongs to the lipase maturation factor family.

It is found in the endoplasmic reticulum membrane. Involved in the maturation of specific proteins in the endoplasmic reticulum. May be required for maturation and transport of active lipoprotein lipase (LPL) through the secretory pathway. This chain is Lipase maturation factor 2 (LMF2), found in Homo sapiens (Human).